Reading from the N-terminus, the 205-residue chain is Small ribosomal subunit protein uS4 (205 aa).

Residues 14-49 (RMGENIWGRPKSPVNRREYGPGQHGQRRKGKMSDFG) form a disordered region. The 64-residue stretch at 94-157 (SRLDAIVYRA…KQLVTVLEAV (64 aa)) folds into the S4 RNA-binding domain.

Belongs to the universal ribosomal protein uS4 family. In terms of assembly, part of the 30S ribosomal subunit. Contacts protein S5. The interaction surface between S4 and S5 is involved in control of translational fidelity.

Its function is as follows. One of the primary rRNA binding proteins, it binds directly to 16S rRNA where it nucleates assembly of the body of the 30S subunit. With S5 and S12 plays an important role in translational accuracy. This is Small ribosomal subunit protein uS4 from Agrobacterium fabrum (strain C58 / ATCC 33970) (Agrobacterium tumefaciens (strain C58)).